We begin with the raw amino-acid sequence, 85 residues long: Translation initiation factor IF-1 1 (85 aa).

Positions 1 to 72 constitute an S1-like domain; that stretch reads MSKEDLIEMQ…NKGRLTFRHI (72 aa).

The protein belongs to the IF-1 family. In terms of assembly, component of the 30S ribosomal translation pre-initiation complex which assembles on the 30S ribosome in the order IF-2 and IF-3, IF-1 and N-formylmethionyl-tRNA(fMet); mRNA recruitment can occur at any time during PIC assembly.

It is found in the cytoplasm. In terms of biological role, one of the essential components for the initiation of protein synthesis. Stabilizes the binding of IF-2 and IF-3 on the 30S subunit to which N-formylmethionyl-tRNA(fMet) subsequently binds. Helps modulate mRNA selection, yielding the 30S pre-initiation complex (PIC). Upon addition of the 50S ribosomal subunit IF-1, IF-2 and IF-3 are released leaving the mature 70S translation initiation complex. In Paracidovorax citrulli (strain AAC00-1) (Acidovorax citrulli), this protein is Translation initiation factor IF-1 1.